Here is a 294-residue protein sequence, read N- to C-terminus: NAD kinase (294 aa).

Catalysis depends on aspartate 74, which acts as the Proton acceptor. Residues 74–75 (DG), 148–149 (NE), histidine 159, arginine 176, aspartate 178, and 189–194 (TAYSLS) contribute to the NAD(+) site.

It belongs to the NAD kinase family. It depends on a divalent metal cation as a cofactor.

It localises to the cytoplasm. The catalysed reaction is NAD(+) + ATP = ADP + NADP(+) + H(+). Involved in the regulation of the intracellular balance of NAD and NADP, and is a key enzyme in the biosynthesis of NADP. Catalyzes specifically the phosphorylation on 2'-hydroxyl of the adenosine moiety of NAD to yield NADP. In Pseudoalteromonas translucida (strain TAC 125), this protein is NAD kinase.